A 447-amino-acid chain; its full sequence is Tryptophan synthase beta chain (447 aa).

The residue at position 92 (lysine 92) is an N6-(pyridoxal phosphate)lysine. Residues glycine 408–lysine 447 are disordered.

It belongs to the TrpB family. Tetramer of two alpha and two beta chains. The cofactor is pyridoxal 5'-phosphate.

The catalysed reaction is (1S,2R)-1-C-(indol-3-yl)glycerol 3-phosphate + L-serine = D-glyceraldehyde 3-phosphate + L-tryptophan + H2O. It functions in the pathway amino-acid biosynthesis; L-tryptophan biosynthesis; L-tryptophan from chorismate: step 5/5. The beta subunit is responsible for the synthesis of L-tryptophan from indole and L-serine. The protein is Tryptophan synthase beta chain of Polaromonas sp. (strain JS666 / ATCC BAA-500).